We begin with the raw amino-acid sequence, 212 residues long: Putative 3-methyladenine DNA glycosylase (212 aa).

This sequence belongs to the DNA glycosylase MPG family.

The sequence is that of Putative 3-methyladenine DNA glycosylase from Nocardia farcinica (strain IFM 10152).